The following is a 233-amino-acid chain: Transcriptional regulatory protein PrrA (233 aa).

The region spanning 9–123 (RVLVVDDDSD…ELVARVKALL (115 aa)) is the Response regulatory domain. 4-aspartylphosphate is present on aspartate 58. Residues 134 to 232 (SETITVGPLE…VRGVGFVLRM (99 aa)) constitute a DNA-binding region (ompR/PhoB-type).

In terms of processing, phosphorylated by PrrB at Asp-58.

The protein resides in the cytoplasm. In terms of biological role, member of the two-component regulatory system PrrB/PrrA that is involved specifically in early intracellular multiplication of Mycobacterium and is essential for its viability. Upon phosphorylation by PrrB, functions as a transcription regulator by direct binding to promoter regions of target genes to positively regulate their expression. Autoregulates its own expression. The chain is Transcriptional regulatory protein PrrA (prrA) from Mycobacterium bovis (strain ATCC BAA-935 / AF2122/97).